Here is a 592-residue protein sequence, read N- to C-terminus: Frizzled-9 (592 aa).

An N-terminal signal peptide occupies residues methionine 1–alanine 23. Over leucine 24–aspartate 230 the chain is Extracellular. In terms of domain architecture, FZ spans arginine 35–alanine 156. 5 disulfide bridges follow: cysteine 40–cysteine 101, cysteine 48–cysteine 94, cysteine 85–cysteine 123, cysteine 112–cysteine 153, and cysteine 116–cysteine 140. The tract at residues proline 59–methionine 173 is required for Wnt-activated receptor activity. Residues phenylalanine 231–valine 251 form a helical membrane-spanning segment. Over phenylalanine 252–proline 267 the chain is Cytoplasmic. The chain crosses the membrane as a helical span at residues isoleucine 268–alanine 288. Over glycine 289 to cysteine 314 the chain is Extracellular. A helical membrane pass occupies residues threonine 315–leucine 335. Over threonine 336–glycine 356 the chain is Cytoplasmic. A helical membrane pass occupies residues serine 357 to leucine 377. Residues arginine 378–glycine 401 are Extracellular-facing. Residues phenylalanine 402–phenylalanine 422 traverse the membrane as a helical segment. The Cytoplasmic segment spans residues valine 423–lysine 448. Residues isoleucine 449–tyrosine 469 form a helical membrane-spanning segment. The Extracellular portion of the chain corresponds to glutamate 470–alanine 509. Residues valine 510–tryptophan 530 form a helical membrane-spanning segment. Residues serine 531–leucine 592 are Cytoplasmic-facing. The Lys-Thr-X-X-X-Trp motif, mediates interaction with the PDZ domain of Dvl family members motif lies at lysine 533–tryptophan 538. The segment at alanine 555–leucine 592 is required for CTNNB1 accumulation and TCF transcription factor activity.

It belongs to the G-protein coupled receptor Fz/Smo family. In terms of processing, ubiquitinated by ZNRF3, leading to its degradation by the proteasome.

It is found in the cell membrane. Its function is as follows. Receptor for WNT2 that is coupled to the beta-catenin canonical signaling pathway, which leads to the activation of disheveled proteins, inhibition of GSK-3 kinase, nuclear accumulation of beta-catenin and activation of Wnt target genes. Plays a role in neuromuscular junction (NMJ) assembly by negatively regulating the clustering of acetylcholine receptors (AChR) through the beta-catenin canonical signaling pathway. May play a role in neural progenitor cells (NPCs) viability through the beta-catenin canonical signaling pathway by negatively regulating cell cycle arrest leading to inhibition of neuron apoptotic process. During hippocampal development, regulates neuroblast proliferation and apoptotic cell death. Controls bone formation through non canonical Wnt signaling mediated via ISG15. Positively regulates bone regeneration through non canonical Wnt signaling. The sequence is that of Frizzled-9 from Rattus norvegicus (Rat).